A 203-amino-acid polypeptide reads, in one-letter code: Nucleoside triphosphate pyrophosphatase (203 aa).

Asp-78 functions as the Proton acceptor in the catalytic mechanism.

It belongs to the Maf family. A divalent metal cation serves as cofactor.

The protein localises to the cytoplasm. The catalysed reaction is a ribonucleoside 5'-triphosphate + H2O = a ribonucleoside 5'-phosphate + diphosphate + H(+). The enzyme catalyses a 2'-deoxyribonucleoside 5'-triphosphate + H2O = a 2'-deoxyribonucleoside 5'-phosphate + diphosphate + H(+). Its function is as follows. Nucleoside triphosphate pyrophosphatase. May have a dual role in cell division arrest and in preventing the incorporation of modified nucleotides into cellular nucleic acids. The sequence is that of Nucleoside triphosphate pyrophosphatase from Prochlorococcus marinus (strain AS9601).